The following is a 455-amino-acid chain: Argininosuccinate lyase (455 aa).

Belongs to the lyase 1 family. Argininosuccinate lyase subfamily.

The protein localises to the cytoplasm. It catalyses the reaction 2-(N(omega)-L-arginino)succinate = fumarate + L-arginine. Its pathway is amino-acid biosynthesis; L-arginine biosynthesis; L-arginine from L-ornithine and carbamoyl phosphate: step 3/3. The protein is Argininosuccinate lyase of Shewanella sp. (strain ANA-3).